A 44-amino-acid chain; its full sequence is Large ribosomal subunit protein bL34 (44 aa).

Belongs to the bacterial ribosomal protein bL34 family.

This is Large ribosomal subunit protein bL34 from Neorickettsia sennetsu (strain ATCC VR-367 / Miyayama) (Ehrlichia sennetsu).